Here is a 252-residue protein sequence, read N- to C-terminus: Serine/threonine phosphatase stp (252 aa).

Positions 1 to 18 are enriched in basic and acidic residues; the sequence is MHAEFRTDRGRIRHHNED. Residues 1-23 form a disordered region; the sequence is MHAEFRTDRGRIRHHNEDNGGVF. In terms of domain architecture, PPM-type phosphatase spans 2–242; the sequence is HAEFRTDRGR…DNITVLLVER (241 aa). Mn(2+) contacts are provided by D36, G37, D194, and D233.

This sequence belongs to the PP2C family. Mn(2+) serves as cofactor.

It is found in the cytoplasm. The protein localises to the membrane. The catalysed reaction is O-phospho-L-seryl-[protein] + H2O = L-seryl-[protein] + phosphate. It carries out the reaction O-phospho-L-threonyl-[protein] + H2O = L-threonyl-[protein] + phosphate. In terms of biological role, protein phosphatase that dephosphorylates EF-Tu. The protein is Serine/threonine phosphatase stp (stp) of Listeria monocytogenes serotype 4b (strain F2365).